A 124-amino-acid polypeptide reads, in one-letter code: UPF0231 protein SO_3983 (124 aa).

This sequence belongs to the UPF0231 family.

This chain is UPF0231 protein SO_3983, found in Shewanella oneidensis (strain ATCC 700550 / JCM 31522 / CIP 106686 / LMG 19005 / NCIMB 14063 / MR-1).